A 164-amino-acid chain; its full sequence is Protein SprT (164 aa).

Residues 14-156 (QLAESFFKRP…LCRRCRNTLV (143 aa)) enclose the SprT-like domain. A Zn(2+)-binding site is contributed by H69. E70 is a catalytic residue. H73 lines the Zn(2+) pocket.

This sequence belongs to the SprT family. It depends on Zn(2+) as a cofactor.

The protein resides in the cytoplasm. This Pseudomonas fluorescens (strain Pf0-1) protein is Protein SprT.